A 251-amino-acid polypeptide reads, in one-letter code: Aspartate/glutamate leucyltransferase (251 aa).

Belongs to the R-transferase family. Bpt subfamily.

Its subcellular location is the cytoplasm. It catalyses the reaction N-terminal L-glutamyl-[protein] + L-leucyl-tRNA(Leu) = N-terminal L-leucyl-L-glutamyl-[protein] + tRNA(Leu) + H(+). The catalysed reaction is N-terminal L-aspartyl-[protein] + L-leucyl-tRNA(Leu) = N-terminal L-leucyl-L-aspartyl-[protein] + tRNA(Leu) + H(+). In terms of biological role, functions in the N-end rule pathway of protein degradation where it conjugates Leu from its aminoacyl-tRNA to the N-termini of proteins containing an N-terminal aspartate or glutamate. The sequence is that of Aspartate/glutamate leucyltransferase from Nitrosospira multiformis (strain ATCC 25196 / NCIMB 11849 / C 71).